Reading from the N-terminus, the 603-residue chain is Aspartate--tRNA(Asp/Asn) ligase (603 aa).

Residue glutamate 187 coordinates L-aspartate. Positions 211 to 214 (QQFK) are aspartate. Residues arginine 233 and histidine 461 each coordinate L-aspartate. Residue 233 to 235 (RDE) participates in ATP binding. Residue glutamate 495 participates in ATP binding. Residue arginine 502 coordinates L-aspartate. 547–550 (GLDR) serves as a coordination point for ATP.

This sequence belongs to the class-II aminoacyl-tRNA synthetase family. Type 1 subfamily. As to quaternary structure, homodimer.

The protein localises to the cytoplasm. It catalyses the reaction tRNA(Asx) + L-aspartate + ATP = L-aspartyl-tRNA(Asx) + AMP + diphosphate. Functionally, aspartyl-tRNA synthetase with relaxed tRNA specificity since it is able to aspartylate not only its cognate tRNA(Asp) but also tRNA(Asn). Reaction proceeds in two steps: L-aspartate is first activated by ATP to form Asp-AMP and then transferred to the acceptor end of tRNA(Asp/Asn). This Chlorobaculum parvum (strain DSM 263 / NCIMB 8327) (Chlorobium vibrioforme subsp. thiosulfatophilum) protein is Aspartate--tRNA(Asp/Asn) ligase.